The chain runs to 270 residues: Sulfur carrier protein FdhD (270 aa).

Cys-116 acts as the Cysteine persulfide intermediate in catalysis. 253–258 lines the Mo-bis(molybdopterin guanine dinucleotide) pocket; that stretch reads FAREGK.

It belongs to the FdhD family.

It is found in the cytoplasm. Its function is as follows. Required for formate dehydrogenase (FDH) activity. Acts as a sulfur carrier protein that transfers sulfur from IscS to the molybdenum cofactor prior to its insertion into FDH. The sequence is that of Sulfur carrier protein FdhD from Haemophilus influenzae (strain 86-028NP).